A 391-amino-acid polypeptide reads, in one-letter code: Nuclear hormone receptor family member nhr-115 (391 aa).

Positions 5–77 form a DNA-binding region, nuclear receptor; it reads LFPCQICGQN…IGMDASKFQY (73 aa). The NR C4-type zinc-finger motif lies at 8 to 28; the sequence is CQICGQNSHGTHFGIVSCRAC. The NR C4-type; atypical zinc finger occupies 41 to 65; that stretch reads ARKGCLTNFKDKGSCFCKPCRLRKC. One can recognise an NR LBD domain in the interval 130–388; it reads YLDHGCETPI…FSHPEMFDDS (259 aa).

Belongs to the nuclear hormone receptor family.

It localises to the nucleus. Its function is as follows. Orphan nuclear receptor. The sequence is that of Nuclear hormone receptor family member nhr-115 (nhr-115) from Caenorhabditis elegans.